Reading from the N-terminus, the 508-residue chain is uncharacterized protein (508 aa).

The chain crosses the membrane as a helical span at residues 7–29 (ALAIVLALILSLALPELLFQLYP).

The protein resides in the membrane. This is an uncharacterized protein from Archaeoglobus fulgidus (strain ATCC 49558 / DSM 4304 / JCM 9628 / NBRC 100126 / VC-16).